Consider the following 379-residue polypeptide: Cytochrome b (379 aa).

4 helical membrane passes run 33 to 53 (FGSLLGMCLVIQILTGLFLAM), 77 to 98 (WLIRYLHANGASMFFICLFIHV), 113 to 133 (WNIGIILFLTTMATAFVGYVL), and 178 to 198 (FFAFHFILPFIIAAFALVHLL). Residues H83 and H97 each contribute to the heme b site. Heme b-binding residues include H182 and H196. H201 contacts a ubiquinone. The next 4 helical transmembrane spans lie at 226-246 (IKDLLGIFLLLLVLMILTLFF), 288-308 (LGGVLALILSILILAAFPLLN), 320-340 (VTQVIYWIFIANLLVLTWIGG), and 347-367 (FTMIGQIASITYFAIIIILIP).

This sequence belongs to the cytochrome b family. As to quaternary structure, the cytochrome bc1 complex contains 11 subunits: 3 respiratory subunits (MT-CYB, CYC1 and UQCRFS1), 2 core proteins (UQCRC1 and UQCRC2) and 6 low-molecular weight proteins (UQCRH/QCR6, UQCRB/QCR7, UQCRQ/QCR8, UQCR10/QCR9, UQCR11/QCR10 and a cleavage product of UQCRFS1). This cytochrome bc1 complex then forms a dimer. Requires heme b as cofactor.

The protein localises to the mitochondrion inner membrane. Component of the ubiquinol-cytochrome c reductase complex (complex III or cytochrome b-c1 complex) that is part of the mitochondrial respiratory chain. The b-c1 complex mediates electron transfer from ubiquinol to cytochrome c. Contributes to the generation of a proton gradient across the mitochondrial membrane that is then used for ATP synthesis. The sequence is that of Cytochrome b (MT-CYB) from Akodon subfuscus (Puno grass mouse).